Here is a 176-residue protein sequence, read N- to C-terminus: Large ribosomal subunit protein uL16 (176 aa).

It belongs to the universal ribosomal protein uL16 family.

The polypeptide is Large ribosomal subunit protein uL16 (Sulfolobus acidocaldarius (strain ATCC 33909 / DSM 639 / JCM 8929 / NBRC 15157 / NCIMB 11770)).